We begin with the raw amino-acid sequence, 442 residues long: Citrate transporter CitP (442 aa).

13 helical membrane-spanning segments follow: residues 27–47, 59–79, 83–103, 114–134, 151–171, 177–197, 209–229, 267–287, 293–313, 321–341, 349–369, 387–409, and 421–441; these read ISGI…IAIS, IFAL…LPIF, LGGG…TNVI, FING…SSLF, VAFI…VIIG, AILY…IVPL, SAGI…LAII, YVQL…GTML, GINA…FGLL, VIMF…AGVG, VLLA…IVAI, AAIT…VLAA, and MGNR…VTFM.

It belongs to the 2-hydroxycarboxylate transporter (2-HCT) (TC 2.A.24) family.

It is found in the cell membrane. The catalysed reaction is (R)-lactate(in) + citrate(out) = (R)-lactate(out) + citrate(in). It catalyses the reaction (S)-lactate(in) + citrate(out) = (S)-lactate(out) + citrate(in). The enzyme catalyses citrate(in) + H(+)(in) = citrate(out) + H(+)(out). The transport of citrate is unaffected by the presence of citrate in the growth media. Its function is as follows. Secondary transporter involved in citrate metabolism. During cometabolism of citrate and glucose, catalyzes the uptake of divalent citrate into the cell coupled to the exit of monovalent lactate, the end product of glycolysis in L.lactis. The citrate/lactate exchange is electrogenic and results in the generation of a membrane potential. Plays an important role in resistance against lactate toxicity at low pH. In the absence of glucose, i.e. when no lactate is produced, CitP catalyzes the uptake of citrate in exchange with the citrate metabolism intermediates pyruvate and alpha-acetolactate, and the end product acetate. In the absence of glucose, CitP can also catalyze the proton-dependent transport of citrate. In vitro, shows a broad substrate specificity. Can transport a wide variety of mono- and dicarboxylates of the form X-CR(2)-COO(-), where X represents OH (2-hydroxy acid), O (2-keto acid), or H (acid) and R groups differ in size, hydrophobicity and composition. Many of the substrates are intermediates or products of amino acid metabolism, suggesting that CitP may have a broader physiological function than its role in citrate metabolism. In Lactococcus lactis subsp. lactis (Streptococcus lactis), this protein is Citrate transporter CitP.